We begin with the raw amino-acid sequence, 508 residues long: Histidine ammonia-lyase (508 aa).

Residues 143–145 constitute a cross-link (5-imidazolinone (Ala-Gly)); it reads ASG. S144 is modified (2,3-didehydroalanine (Ser)).

It belongs to the PAL/histidase family. Contains an active site 4-methylidene-imidazol-5-one (MIO), which is formed autocatalytically by cyclization and dehydration of residues Ala-Ser-Gly.

The protein resides in the cytoplasm. The enzyme catalyses L-histidine = trans-urocanate + NH4(+). Its pathway is amino-acid degradation; L-histidine degradation into L-glutamate; N-formimidoyl-L-glutamate from L-histidine: step 1/3. The protein is Histidine ammonia-lyase of Anaeromyxobacter sp. (strain K).